The following is a 232-amino-acid chain: Probable intron-encoded endonuclease aI3 (232 aa).

This sequence belongs to the LAGLIDADG endonuclease family.

It is found in the mitochondrion. Functionally, mitochondrial DNA endonuclease involved in intron homing. This is Probable intron-encoded endonuclease aI3 (aI3) from Dictyostelium discoideum (Social amoeba).